The sequence spans 358 residues: Magnesium-protoporphyrin IX monomethyl ester [oxidative] cyclase 3 (358 aa).

This sequence belongs to the AcsF family. The cofactor is Fe cation.

The enzyme catalyses Mg-protoporphyrin IX 13-monomethyl ester + 3 NADPH + 3 O2 + 2 H(+) = 3,8-divinyl protochlorophyllide a + 3 NADP(+) + 5 H2O. It functions in the pathway porphyrin-containing compound metabolism; chlorophyll biosynthesis (light-independent). Functionally, catalyzes the formation of the isocyclic ring in chlorophyll biosynthesis. Mediates the cyclase reaction, which results in the formation of divinylprotochlorophyllide (Pchlide) characteristic of all chlorophylls from magnesium-protoporphyrin IX 13-monomethyl ester (MgPMME). This chain is Magnesium-protoporphyrin IX monomethyl ester [oxidative] cyclase 3, found in Nostoc sp. (strain PCC 7120 / SAG 25.82 / UTEX 2576).